Reading from the N-terminus, the 210-residue chain is Cytochrome c biogenesis ATP-binding export protein CcmA (210 aa).

Positions 1 to 208 (MHLNQLVISH…KVRTLSLDQF (208 aa)) constitute an ABC transporter domain. 38–45 (GHNGIGKT) is an ATP binding site.

This sequence belongs to the ABC transporter superfamily. CcmA exporter (TC 3.A.1.107) family. As to quaternary structure, the complex is composed of two ATP-binding proteins (CcmA) and two transmembrane proteins (CcmB).

The protein resides in the cell inner membrane. It catalyses the reaction heme b(in) + ATP + H2O = heme b(out) + ADP + phosphate + H(+). In terms of biological role, part of the ABC transporter complex CcmAB involved in the biogenesis of c-type cytochromes; once thought to export heme, this seems not to be the case, but its exact role is uncertain. Responsible for energy coupling to the transport system. The sequence is that of Cytochrome c biogenesis ATP-binding export protein CcmA from Haemophilus ducreyi (strain 35000HP / ATCC 700724).